The sequence spans 316 residues: Protoheme IX farnesyltransferase (316 aa).

Helical transmembrane passes span 32–52 (VMSL…THVN), 53–73 (PIIG…SGAL), 98–118 (VARE…VITL), 120–140 (FVAN…YVVI), 153–173 (IVIG…AVAG), 180–200 (LALF…LALV), 226–246 (ILLY…IGFA), 251–271 (GLLS…VYLA), and 280–300 (VAMR…AAIV).

Belongs to the UbiA prenyltransferase family. Protoheme IX farnesyltransferase subfamily.

The protein resides in the cell inner membrane. It carries out the reaction heme b + (2E,6E)-farnesyl diphosphate + H2O = Fe(II)-heme o + diphosphate. It functions in the pathway porphyrin-containing compound metabolism; heme O biosynthesis; heme O from protoheme: step 1/1. Functionally, converts heme B (protoheme IX) to heme O by substitution of the vinyl group on carbon 2 of heme B porphyrin ring with a hydroxyethyl farnesyl side group. The protein is Protoheme IX farnesyltransferase of Methylocella silvestris (strain DSM 15510 / CIP 108128 / LMG 27833 / NCIMB 13906 / BL2).